A 218-amino-acid polypeptide reads, in one-letter code: Methylthioribulose-1-phosphate dehydratase (218 aa).

Zn(2+) is bound by residues H107 and H109.

This sequence belongs to the aldolase class II family. MtnB subfamily. Zn(2+) serves as cofactor.

It carries out the reaction 5-(methylsulfanyl)-D-ribulose 1-phosphate = 5-methylsulfanyl-2,3-dioxopentyl phosphate + H2O. The protein operates within amino-acid biosynthesis; L-methionine biosynthesis via salvage pathway; L-methionine from S-methyl-5-thio-alpha-D-ribose 1-phosphate: step 2/6. Catalyzes the dehydration of methylthioribulose-1-phosphate (MTRu-1-P) into 2,3-diketo-5-methylthiopentyl-1-phosphate (DK-MTP-1-P). The chain is Methylthioribulose-1-phosphate dehydratase from Xylella fastidiosa (strain Temecula1 / ATCC 700964).